We begin with the raw amino-acid sequence, 41 residues long: Chymotrypsin inhibitor (41 aa).

In terms of biological role, inhibits chymotrypsin. This chain is Chymotrypsin inhibitor, found in Eisenia hortensis (European nightcrawler).